We begin with the raw amino-acid sequence, 315 residues long: Protein-L-isoaspartate O-methyltransferase (315 aa).

Disordered regions lie at residues 1–47 and 59–89; these read MSGE…KPAA and RALPGTTAAKPATAPKPNLLKPAMPQPAAPK. Over residues 14 to 34 the composition is skewed to basic and acidic residues; the sequence is EDLKRAPRKSEVRSGSGERHA. Composition is skewed to low complexity over residues 35–47 and 59–81; these read ASAVPKAADKPAA and RALPGTTAAKPATAPKPNLLKPA. S162 is an active-site residue.

Belongs to the methyltransferase superfamily. L-isoaspartyl/D-aspartyl protein methyltransferase family.

It is found in the cytoplasm. It carries out the reaction [protein]-L-isoaspartate + S-adenosyl-L-methionine = [protein]-L-isoaspartate alpha-methyl ester + S-adenosyl-L-homocysteine. Functionally, catalyzes the methyl esterification of L-isoaspartyl residues in peptides and proteins that result from spontaneous decomposition of normal L-aspartyl and L-asparaginyl residues. It plays a role in the repair and/or degradation of damaged proteins. This Burkholderia ambifaria (strain MC40-6) protein is Protein-L-isoaspartate O-methyltransferase.